A 494-amino-acid polypeptide reads, in one-letter code: Cobyric acid synthase (494 aa).

The GATase cobBQ-type domain occupies 252–444; sequence DLNIAVIRLP…LHGLFDNGPW (193 aa). The Nucleophile role is filled by cysteine 333. Residue histidine 436 is part of the active site.

This sequence belongs to the CobB/CobQ family. CobQ subfamily.

It functions in the pathway cofactor biosynthesis; adenosylcobalamin biosynthesis. Functionally, catalyzes amidations at positions B, D, E, and G on adenosylcobyrinic A,C-diamide. NH(2) groups are provided by glutamine, and one molecule of ATP is hydrogenolyzed for each amidation. This is Cobyric acid synthase from Nostoc punctiforme (strain ATCC 29133 / PCC 73102).